We begin with the raw amino-acid sequence, 795 residues long: Phenylalanine--tRNA ligase beta subunit (795 aa).

The 110-residue stretch at 39–148 folds into the tRNA-binding domain; the sequence is AGSFHGVVVG…ADAPIGTDIR (110 aa). A B5 domain is found at 401-476; sequence PKRATITLRR…RVYGYNNIPD (76 aa). The Mg(2+) site is built by D454, D460, E463, and E464. In terms of domain architecture, FDX-ACB spans 701–794; it reads SRFPANRRDI…LKERFQASLR (94 aa).

Belongs to the phenylalanyl-tRNA synthetase beta subunit family. Type 1 subfamily. Tetramer of two alpha and two beta subunits. It depends on Mg(2+) as a cofactor.

It localises to the cytoplasm. It catalyses the reaction tRNA(Phe) + L-phenylalanine + ATP = L-phenylalanyl-tRNA(Phe) + AMP + diphosphate + H(+). This chain is Phenylalanine--tRNA ligase beta subunit (pheT), found in Escherichia coli (strain K12).